The following is an 86-amino-acid chain: Large ribosomal subunit protein bL31B (86 aa).

Belongs to the bacterial ribosomal protein bL31 family. Type B subfamily. As to quaternary structure, part of the 50S ribosomal subunit.

The sequence is that of Large ribosomal subunit protein bL31B from Saccharopolyspora erythraea (strain ATCC 11635 / DSM 40517 / JCM 4748 / NBRC 13426 / NCIMB 8594 / NRRL 2338).